The primary structure comprises 275 residues: NH(3)-dependent NAD(+) synthetase (275 aa).

ATP is bound at residue 46–53; sequence GISGGQDS. Asp52 provides a ligand contact to Mg(2+). Arg140 serves as a coordination point for deamido-NAD(+). ATP is bound at residue Thr160. Residue Glu165 coordinates Mg(2+). Deamido-NAD(+) contacts are provided by Lys173 and Asp180. Lys189 and Thr211 together coordinate ATP. 260 to 261 contacts deamido-NAD(+); it reads HK.

This sequence belongs to the NAD synthetase family. As to quaternary structure, homodimer.

The catalysed reaction is deamido-NAD(+) + NH4(+) + ATP = AMP + diphosphate + NAD(+) + H(+). Its pathway is cofactor biosynthesis; NAD(+) biosynthesis; NAD(+) from deamido-NAD(+) (ammonia route): step 1/1. Catalyzes the ATP-dependent amidation of deamido-NAD to form NAD. Uses ammonia as a nitrogen source. The protein is NH(3)-dependent NAD(+) synthetase of Escherichia coli O7:K1 (strain IAI39 / ExPEC).